The following is a 395-amino-acid chain: Protein BTN1 (395 aa).

Residues 1–31 form the signal peptide; the sequence is MQLEPAHLVYAAFWTFGLVNNVLYVVILTAA. 10 consecutive transmembrane segments (helical) span residues 43–63, 74–94, 96–116, 134–154, 158–178, 222–242, 261–278, 291–311, 313–333, and 355–375; these read VVLL…PFFI, LLVG…PLFL, LVGV…FLQL, GAGL…GVSV, LLVF…LLPP, PLVM…YTIN, FRDV…GVFI, IMIP…QSMS, ILPN…LGGA, and LGSV…VSLW.

Belongs to the battenin family.

The protein resides in the vacuole membrane. Its function is as follows. Involved in vacuolar transport and vacuole pH homeostasis. Also required for cytokinesis. In Yarrowia lipolytica (strain CLIB 122 / E 150) (Yeast), this protein is Protein BTN1 (BTN1).